A 387-amino-acid polypeptide reads, in one-letter code: GTPase Obg (387 aa).

Positions 1-159 (MKFLDEAKIY…MWVRLEMKLL (159 aa)) constitute an Obg domain. One can recognise an OBG-type G domain in the interval 160-334 (ADVGLVGMPN…LVYHVGGMVK (175 aa)). GTP-binding positions include 166–173 (GMPNAGKS), 191–195 (FTTLQ), 213–216 (DIPG), 283–286 (SKAD), and 315–317 (SSA). 2 residues coordinate Mg(2+): Ser-173 and Thr-193. A disordered region spans residues 347–379 (LEDAPTRAGSKALRDEHAPSWQDDDDDDDDDDG). Over residues 368–379 (QDDDDDDDDDDG) the composition is skewed to acidic residues.

The protein belongs to the TRAFAC class OBG-HflX-like GTPase superfamily. OBG GTPase family. In terms of assembly, monomer. The cofactor is Mg(2+).

It is found in the cytoplasm. In terms of biological role, an essential GTPase which binds GTP, GDP and possibly (p)ppGpp with moderate affinity, with high nucleotide exchange rates and a fairly low GTP hydrolysis rate. Plays a role in control of the cell cycle, stress response, ribosome biogenesis and in those bacteria that undergo differentiation, in morphogenesis control. This Magnetococcus marinus (strain ATCC BAA-1437 / JCM 17883 / MC-1) protein is GTPase Obg.